A 405-amino-acid polypeptide reads, in one-letter code: Aminodeoxyfutalosine deaminase (405 aa).

A divalent metal cation is bound by residues H61 and H63. Substrate-binding residues include E141, S145, and H179. H206 lines the a divalent metal cation pocket. Residue E209 is the Proton donor of the active site. D306 serves as a coordination point for a divalent metal cation.

The protein belongs to the metallo-dependent hydrolases superfamily. A divalent metal cation is required as a cofactor.

It carries out the reaction 6-amino-6-deoxyfutalosine + H2O + H(+) = futalosine + NH4(+). It functions in the pathway quinol/quinone metabolism; menaquinone biosynthesis. In terms of biological role, catalyzes the deamination of aminodeoxyfutalosine (AFL) into futalosine (FL), a step in the biosynthesis of menaquinone (MK, vitamin K2). To a lesser extent, can also deaminate 5'-methylthioadenosine. This is Aminodeoxyfutalosine deaminase from Nitratiruptor sp. (strain SB155-2).